Here is a 64-residue protein sequence, read N- to C-terminus: Large ribosomal subunit protein bL35 (64 aa).

This sequence belongs to the bacterial ribosomal protein bL35 family.

This chain is Large ribosomal subunit protein bL35, found in Leifsonia xyli subsp. xyli (strain CTCB07).